Consider the following 240-residue polypeptide: UDP-2,3-diacylglucosamine hydrolase (240 aa).

The Mn(2+) site is built by D8, H10, D41, N79, and H114. 79–80 contributes to the substrate binding site; that stretch reads NR. Substrate contacts are provided by D122, S160, N164, K167, and H195. H195 and H197 together coordinate Mn(2+).

It belongs to the LpxH family. Mn(2+) is required as a cofactor.

The protein localises to the cell inner membrane. The catalysed reaction is UDP-2-N,3-O-bis[(3R)-3-hydroxytetradecanoyl]-alpha-D-glucosamine + H2O = 2-N,3-O-bis[(3R)-3-hydroxytetradecanoyl]-alpha-D-glucosaminyl 1-phosphate + UMP + 2 H(+). It participates in glycolipid biosynthesis; lipid IV(A) biosynthesis; lipid IV(A) from (3R)-3-hydroxytetradecanoyl-[acyl-carrier-protein] and UDP-N-acetyl-alpha-D-glucosamine: step 4/6. Hydrolyzes the pyrophosphate bond of UDP-2,3-diacylglucosamine to yield 2,3-diacylglucosamine 1-phosphate (lipid X) and UMP by catalyzing the attack of water at the alpha-P atom. Involved in the biosynthesis of lipid A, a phosphorylated glycolipid that anchors the lipopolysaccharide to the outer membrane of the cell. The polypeptide is UDP-2,3-diacylglucosamine hydrolase (Escherichia coli O6:K15:H31 (strain 536 / UPEC)).